We begin with the raw amino-acid sequence, 632 residues long: Arginyl-tRNA--protein transferase 1 (632 aa).

The segment covering 1–18 has biased composition (polar residues); it reads MSLKNDASSSHDGGSNRE. 4 disordered regions span residues 1–27, 113–144, 284–312, and 517–580; these read MSLK…HGRR, KLDV…AKSE, NGNI…HQAR, and PAAS…NDIN. The span at 113 to 122 shows a compositional bias: basic and acidic residues; sequence KLDVQPREQR. Positions 285–296 are enriched in polar residues; it reads GNISRGANSLDG. The span at 298–310 shows a compositional bias: basic and acidic residues; it reads ETLHAKKDSENHQ. Positions 538–563 are enriched in acidic residues; that stretch reads SDEDEDEDEDDDDDDDDDEEMYETES. Basic and acidic residues predominate over residues 564-578; sequence EDSHIESDPGSKDND.

It belongs to the R-transferase family.

The catalysed reaction is an N-terminal L-alpha-aminoacyl-[protein] + L-arginyl-tRNA(Arg) = an N-terminal L-arginyl-L-aminoacyl-[protein] + tRNA(Arg) + H(+). Functionally, involved in the post-translational conjugation of arginine to the N-terminal aspartate or glutamate of a protein. This arginylation is required for degradation of the protein via the ubiquitin pathway. Component of the N-end rule pathway with ATE2 and PRT6. The N-end rule pathway regulates seed after-ripening, seedling sugar sensitivity, seedling lipid breakdown, and abscisic acid (ABA) sensitivity of germination. The end-rule pathway regulates various aspects of leaf and shoot development. Involved in the oxygen-dependent N-arginylation of RAP2-12, an activator of hypoxic gene expression. This N-terminal modification leads to ubiquitination by PRT6 and subsequent degradation of RAP2-12 under aerobic conditions. Has an important role in the progression of leaf senescence. Involved in disease resistance. The end-rule pathway plays a role in regulating the timing and amplitude of the immune response following infection with the bacterial pathogen Pseudomonas syringae pv tomato. Regulates the biosynthesis of plant-defense metabolites such as glucosinolates, and the biosynthesis and response to the phytohormone jasmonate (JA), which plays a key role in plant immunity. The polypeptide is Arginyl-tRNA--protein transferase 1 (Arabidopsis thaliana (Mouse-ear cress)).